Here is a 45-residue protein sequence, read N- to C-terminus: Photosystem I reaction center subunit IX 1 (45 aa).

The helical transmembrane segment at tryptophan 9–valine 29 threads the bilayer.

It belongs to the PsaJ family.

The protein localises to the cellular thylakoid membrane. In terms of biological role, may help in the organization of the PsaE and PsaF subunits. The chain is Photosystem I reaction center subunit IX 1 from Prochlorococcus marinus (strain NATL1A).